Reading from the N-terminus, the 293-residue chain is Formamidopyrimidine-DNA glycosylase (293 aa).

The active-site Schiff-base intermediate with DNA is the P2. E3 serves as the catalytic Proton donor. Catalysis depends on K58, which acts as the Proton donor; for beta-elimination activity. The DNA site is built by H104, R123, and K166. The FPG-type zinc finger occupies 257 to 293 (KVYDREGETCKTPACGGTIKRFTQNGRSTFWCPKCQK). R283 serves as the catalytic Proton donor; for delta-elimination activity.

Belongs to the FPG family. Monomer. Zn(2+) serves as cofactor.

The catalysed reaction is Hydrolysis of DNA containing ring-opened 7-methylguanine residues, releasing 2,6-diamino-4-hydroxy-5-(N-methyl)formamidopyrimidine.. The enzyme catalyses 2'-deoxyribonucleotide-(2'-deoxyribose 5'-phosphate)-2'-deoxyribonucleotide-DNA = a 3'-end 2'-deoxyribonucleotide-(2,3-dehydro-2,3-deoxyribose 5'-phosphate)-DNA + a 5'-end 5'-phospho-2'-deoxyribonucleoside-DNA + H(+). Its function is as follows. Involved in base excision repair of DNA damaged by oxidation or by mutagenic agents. Acts as a DNA glycosylase that recognizes and removes damaged bases. Has a preference for oxidized purines, such as 7,8-dihydro-8-oxoguanine (8-oxoG). Has AP (apurinic/apyrimidinic) lyase activity and introduces nicks in the DNA strand. Cleaves the DNA backbone by beta-delta elimination to generate a single-strand break at the site of the removed base with both 3'- and 5'-phosphates. This Bradyrhizobium diazoefficiens (strain JCM 10833 / BCRC 13528 / IAM 13628 / NBRC 14792 / USDA 110) protein is Formamidopyrimidine-DNA glycosylase.